A 371-amino-acid chain; its full sequence is Glyco-Gag protein (371 aa).

Over 1-51 (MSGASSGTAIGAHLFGVSPEYRVLIGDEGAGPSKSLSEVSFSVWYRSRAAR) the chain is Cytoplasmic. The helical transmembrane segment at 52–72 (LVILCLVASFLVPCLTFLIAE) threads the bilayer. Topologically, residues 73–371 (AVMGQTVTTP…NVIDETFPLT (299 aa)) are extracellular. Asparagine 134 carries an N-linked (GlcNAc...) asparagine; by host glycan. Disordered stretches follow at residues 171–281 (VRPF…NNRP) and 350–371 (VPGE…FPLT). Residues 174–193 (FLPPPKPPTPLPQPLSPQPS) are compositionally biased toward pro residues. Over residues 194 to 203 (APLTSSLYPV) the composition is skewed to low complexity. Pro residues-rich tracts occupy residues 204-220 (VPKP…PDPS) and 230-245 (EPPP…PSGP).

Glycosylated by host. In terms of processing, cleaved by host near the middle of the molecule, releasing the c-terminal half containing capsid and nucleoprotein domains op GAG.

It is found in the host cell membrane. Its function is as follows. Plays a role in viral particle release. Presumably acts by facilitating the fission of the virion bud at the cell surface. The chain is Glyco-Gag protein from Feline sarcoma virus (strain Snyder-Theilen).